The sequence spans 255 residues: 4-hydroxy-tetrahydrodipicolinate reductase (255 aa).

NAD(+)-binding positions include 9–14 (GFKGKM), D35, 89–91 (GTT), and 115–118 (APNF). H145 (proton donor/acceptor) is an active-site residue. H146 serves as a coordination point for (S)-2,3,4,5-tetrahydrodipicolinate. The active-site Proton donor is the K149. Position 155 to 156 (155 to 156 (GT)) interacts with (S)-2,3,4,5-tetrahydrodipicolinate.

It belongs to the DapB family.

It localises to the cytoplasm. It catalyses the reaction (S)-2,3,4,5-tetrahydrodipicolinate + NAD(+) + H2O = (2S,4S)-4-hydroxy-2,3,4,5-tetrahydrodipicolinate + NADH + H(+). The catalysed reaction is (S)-2,3,4,5-tetrahydrodipicolinate + NADP(+) + H2O = (2S,4S)-4-hydroxy-2,3,4,5-tetrahydrodipicolinate + NADPH + H(+). It participates in amino-acid biosynthesis; L-lysine biosynthesis via DAP pathway; (S)-tetrahydrodipicolinate from L-aspartate: step 4/4. Functionally, catalyzes the conversion of 4-hydroxy-tetrahydrodipicolinate (HTPA) to tetrahydrodipicolinate. The protein is 4-hydroxy-tetrahydrodipicolinate reductase of Streptococcus pneumoniae (strain P1031).